The following is a 140-amino-acid chain: Large-conductance mechanosensitive channel 3 (140 aa).

Transmembrane regions (helical) follow at residues 8 to 28 (FISKGNVMDLAVGVIIGAAFG), 30 to 50 (IVTSLVDDVIMPIFGAIFGGL), and 81 to 101 (GSFITAVLNFLILAFIIFLMV).

This sequence belongs to the MscL family. As to quaternary structure, homopentamer.

The protein localises to the cell inner membrane. In terms of biological role, channel that opens in response to stretch forces in the membrane lipid bilayer. May participate in the regulation of osmotic pressure changes within the cell. This is Large-conductance mechanosensitive channel 3 from Mesorhizobium japonicum (strain LMG 29417 / CECT 9101 / MAFF 303099) (Mesorhizobium loti (strain MAFF 303099)).